The following is a 622-amino-acid chain: Probable potassium transport system protein Kup (622 aa).

Transmembrane regions (helical) follow at residues 8-28 (LAVL…TSVL), 50-70 (ILSI…VSLV), 101-121 (VLLL…VITP), 137-157 (PTFT…LFAM), 165-185 (IGKF…LLGV), 213-233 (ITFI…ALYA), 247-267 (WFSV…ALLL), 285-305 (ALIP…QALI), 337-357 (IYMP…VVMF), 366-386 (AYGI…FYVI), 393-413 (PLAL…AFFA), and 419-439 (LFAG…LMIT).

It belongs to the HAK/KUP transporter (TC 2.A.72) family.

It is found in the cell inner membrane. The catalysed reaction is K(+)(in) + H(+)(in) = K(+)(out) + H(+)(out). In terms of biological role, transport of potassium into the cell. Likely operates as a K(+):H(+) symporter. The chain is Probable potassium transport system protein Kup from Polaromonas naphthalenivorans (strain CJ2).